A 132-amino-acid polypeptide reads, in one-letter code: Small ribosomal subunit protein uS8 (132 aa).

Belongs to the universal ribosomal protein uS8 family. As to quaternary structure, part of the 30S ribosomal subunit. Contacts proteins S5 and S12.

Its function is as follows. One of the primary rRNA binding proteins, it binds directly to 16S rRNA central domain where it helps coordinate assembly of the platform of the 30S subunit. The polypeptide is Small ribosomal subunit protein uS8 (Rickettsia felis (strain ATCC VR-1525 / URRWXCal2) (Rickettsia azadi)).